A 526-amino-acid chain; its full sequence is Ribonuclease Y (526 aa).

A helical membrane pass occupies residues 10–30 (ITFILLIVVGALGGALVGYFI). Positions 216 to 279 (TVTVVEIPNE…EVAKRALTIL (64 aa)) constitute a KH domain. Residues 342–435 (VLKHSIEVAF…VAAADALSAA (94 aa)) enclose the HD domain.

This sequence belongs to the RNase Y family.

The protein localises to the cell membrane. In terms of biological role, endoribonuclease that initiates mRNA decay. This is Ribonuclease Y from Acholeplasma laidlawii (strain PG-8A).